A 482-amino-acid polypeptide reads, in one-letter code: tRNA modification GTPase MnmE (482 aa).

(6S)-5-formyl-5,6,7,8-tetrahydrofolate is bound by residues Arg25, Glu82, and Lys135. The 174-residue stretch at 231–404 folds into the TrmE-type G domain; it reads GIKVVIAGQP…LRRVLLDIAG (174 aa). Residue Asn241 coordinates K(+). GTP-binding positions include 241 to 246, 260 to 266, 285 to 288, and 385 to 387; these read NAGKSS, TPIAGTT, DTAG, and SAR. Ser245 provides a ligand contact to Mg(2+). The K(+) site is built by Thr260, Ile262, and Thr265. A Mg(2+)-binding site is contributed by Thr266. Residue Lys482 participates in (6S)-5-formyl-5,6,7,8-tetrahydrofolate binding.

The protein belongs to the TRAFAC class TrmE-Era-EngA-EngB-Septin-like GTPase superfamily. TrmE GTPase family. As to quaternary structure, homodimer. Heterotetramer of two MnmE and two MnmG subunits. K(+) is required as a cofactor.

It localises to the cytoplasm. In terms of biological role, exhibits a very high intrinsic GTPase hydrolysis rate. Involved in the addition of a carboxymethylaminomethyl (cmnm) group at the wobble position (U34) of certain tRNAs, forming tRNA-cmnm(5)s(2)U34. The polypeptide is tRNA modification GTPase MnmE (Paracidovorax citrulli (strain AAC00-1) (Acidovorax citrulli)).